Here is a 569-residue protein sequence, read N- to C-terminus: Proline--tRNA ligase (569 aa).

Belongs to the class-II aminoacyl-tRNA synthetase family. ProS type 1 subfamily. In terms of assembly, homodimer.

Its subcellular location is the cytoplasm. It carries out the reaction tRNA(Pro) + L-proline + ATP = L-prolyl-tRNA(Pro) + AMP + diphosphate. Its function is as follows. Catalyzes the attachment of proline to tRNA(Pro) in a two-step reaction: proline is first activated by ATP to form Pro-AMP and then transferred to the acceptor end of tRNA(Pro). As ProRS can inadvertently accommodate and process non-cognate amino acids such as alanine and cysteine, to avoid such errors it has two additional distinct editing activities against alanine. One activity is designated as 'pretransfer' editing and involves the tRNA(Pro)-independent hydrolysis of activated Ala-AMP. The other activity is designated 'posttransfer' editing and involves deacylation of mischarged Ala-tRNA(Pro). The misacylated Cys-tRNA(Pro) is not edited by ProRS. The sequence is that of Proline--tRNA ligase from Dehalococcoides mccartyi (strain CBDB1).